The primary structure comprises 366 residues: Cobalt-precorrin-5B C(1)-methyltransferase (366 aa).

It belongs to the CbiD family.

The enzyme catalyses Co-precorrin-5B + S-adenosyl-L-methionine = Co-precorrin-6A + S-adenosyl-L-homocysteine. Its pathway is cofactor biosynthesis; adenosylcobalamin biosynthesis; cob(II)yrinate a,c-diamide from sirohydrochlorin (anaerobic route): step 6/10. Catalyzes the methylation of C-1 in cobalt-precorrin-5B to form cobalt-precorrin-6A. In Hahella chejuensis (strain KCTC 2396), this protein is Cobalt-precorrin-5B C(1)-methyltransferase.